We begin with the raw amino-acid sequence, 331 residues long: Ketol-acid reductoisomerase (NADP(+)) (331 aa).

A KARI N-terminal Rossmann domain is found at 2–182 (AKMYYDKDAD…GGTRAGVIET (181 aa)). NADP(+) is bound by residues 25–28 (FGSQ), S51, S53, and 83–86 (DEKQ). H108 is an active-site residue. An NADP(+)-binding site is contributed by G134. A KARI C-terminal knotted domain is found at 183-328 (TFKEETETDL…KGLREMMAWI (146 aa)). D191, E195, E227, and E231 together coordinate Mg(2+). A substrate-binding site is contributed by S252.

The protein belongs to the ketol-acid reductoisomerase family. Requires Mg(2+) as cofactor.

It catalyses the reaction (2R)-2,3-dihydroxy-3-methylbutanoate + NADP(+) = (2S)-2-acetolactate + NADPH + H(+). The catalysed reaction is (2R,3R)-2,3-dihydroxy-3-methylpentanoate + NADP(+) = (S)-2-ethyl-2-hydroxy-3-oxobutanoate + NADPH + H(+). It participates in amino-acid biosynthesis; L-isoleucine biosynthesis; L-isoleucine from 2-oxobutanoate: step 2/4. The protein operates within amino-acid biosynthesis; L-valine biosynthesis; L-valine from pyruvate: step 2/4. Its function is as follows. Involved in the biosynthesis of branched-chain amino acids (BCAA). Catalyzes an alkyl-migration followed by a ketol-acid reduction of (S)-2-acetolactate (S2AL) to yield (R)-2,3-dihydroxy-isovalerate. In the isomerase reaction, S2AL is rearranged via a Mg-dependent methyl migration to produce 3-hydroxy-3-methyl-2-ketobutyrate (HMKB). In the reductase reaction, this 2-ketoacid undergoes a metal-dependent reduction by NADPH to yield (R)-2,3-dihydroxy-isovalerate. In Thermoanaerobacter pseudethanolicus (strain ATCC 33223 / 39E) (Clostridium thermohydrosulfuricum), this protein is Ketol-acid reductoisomerase (NADP(+)).